Reading from the N-terminus, the 857-residue chain is KH domain-containing protein HEN4 (857 aa).

Basic and acidic residues predominate over residues 1 to 15 (MERNSVKFHAEKRSG). The tract at residues 1–27 (MERNSVKFHAEKRSGAFDPGSGFGSSK) is disordered. KH domains follow at residues 46–110 (HAAF…KLGA), 149–217 (TVVC…LVSI), 451–521 (DVVF…IMLI), and 541–610 (SITA…IFHI). A disordered region spans residues 644–755 (SDNPLSIGSH…RGLSDASGGL (112 aa)). 2 stretches are compositionally biased toward polar residues: residues 645-665 (DNPL…NSSS) and 673-688 (SFLS…SRSV). A compositionally biased stretch (basic and acidic residues) spans 718 to 730 (FTMDHSDNSHHLT). The segment covering 746–755 (RGLSDASGGL) has biased composition (low complexity). One can recognise a KH 5 domain in the interval 775 to 839 (NTTVEIRVPA…DQTQAAQNLL (65 aa)).

In terms of assembly, interacts with HUA1. Interacts with FLK and PEP.

Its subcellular location is the nucleus speckle. Functionally, functions in floral reproductive organ identity in the third whorl and floral determinacy specification by specifically promoting the processing of AGAMOUS (AG) pre-mRNA. Functions in association with HUA1 and HUA2. In Arabidopsis thaliana (Mouse-ear cress), this protein is KH domain-containing protein HEN4.